Reading from the N-terminus, the 330-residue chain is DNA-directed RNA polymerase subunit alpha (330 aa).

The interval 1–231 is alpha N-terminal domain (alpha-NTD); it reads MQTNLLKPKT…EQLAVFAQLE (231 aa). The segment at 250–330 is alpha C-terminal domain (alpha-CTD); that stretch reads FDPILLRPVD…NWPPAGLDKR (81 aa).

It belongs to the RNA polymerase alpha chain family. Homodimer. The RNAP catalytic core consists of 2 alpha, 1 beta, 1 beta' and 1 omega subunit. When a sigma factor is associated with the core the holoenzyme is formed, which can initiate transcription.

The catalysed reaction is RNA(n) + a ribonucleoside 5'-triphosphate = RNA(n+1) + diphosphate. DNA-dependent RNA polymerase catalyzes the transcription of DNA into RNA using the four ribonucleoside triphosphates as substrates. In Paracidovorax citrulli (strain AAC00-1) (Acidovorax citrulli), this protein is DNA-directed RNA polymerase subunit alpha.